A 287-amino-acid chain; its full sequence is Pyridoxal kinase PdxY (287 aa).

Residues S10 and 45–46 contribute to the substrate site; that span reads TQ. ATP is bound by residues D112, A144, E149, K182, and 209–212; that span reads RPLV. D224 provides a ligand contact to substrate.

This sequence belongs to the pyridoxine kinase family. PdxY subfamily. In terms of assembly, homodimer. Mg(2+) serves as cofactor.

The enzyme catalyses pyridoxal + ATP = pyridoxal 5'-phosphate + ADP + H(+). It participates in cofactor metabolism; pyridoxal 5'-phosphate salvage; pyridoxal 5'-phosphate from pyridoxal: step 1/1. In terms of biological role, pyridoxal kinase involved in the salvage pathway of pyridoxal 5'-phosphate (PLP). Catalyzes the phosphorylation of pyridoxal to PLP. This Shigella flexneri protein is Pyridoxal kinase PdxY.